The sequence spans 554 residues: Heterochromatin protein 1-binding protein 3 (554 aa).

Ala-2 bears the N-acetylalanine mark. Ser-6 is modified (phosphoserine). 2 disordered regions span residues 30–136 and 142–161; these read LGEK…KTIP and SASQ…SPRP. Position 51 is a phosphothreonine (Thr-51). Residues 60–71 show a composition bias toward acidic residues; that stretch reads GEEEKPEPDGSS. Residue Lys-64 forms a Glycyl lysine isopeptide (Lys-Gly) (interchain with G-Cter in SUMO2) linkage. Phosphothreonine is present on residues Glu-72 and Thr-85. Positions 72 to 93 are enriched in polar residues; that stretch reads EESISTVEEQENETPPATSSEA. Positions 94-129 are enriched in basic and acidic residues; that stretch reads EQPKGEPESGEKEENNNKSAEEPKKDEKDQSKEKEK. Lys-97 is covalently cross-linked (Glycyl lysine isopeptide (Lys-Gly) (interchain with G-Cter in SUMO2)). Residues 142–156 show a composition bias toward polar residues; the sequence is SASQLARAQRQTPMA. Phosphoserine occurs at positions 144, 157, and 158. In terms of domain architecture, H15 1 spans 159 to 234; that stretch reads PRPKMDAILT…GASGSFVVVQ (76 aa). Lys-192 is subject to N6-acetyllysine. Residues 229 to 254 are disordered; sequence SFVVVQKSKPPQKSKNRKKGSALDPE. Over residues 238-248 the composition is skewed to basic residues; it reads PPQKSKNRKKG. Ser-249 is subject to Phosphoserine. Positions 255-259 match the PxVxL motif motif; sequence PQVKL. H15 domains lie at 255–330 and 337–413; these read PQVK…QLKK and LGGS…QLSF. Lys-258 participates in a covalent cross-link: Glycyl lysine isopeptide (Lys-Gly) (interchain with G-Cter in SUMO2). Positions 420–554 are disordered; sequence GVLFPKKESG…AMKKSFKTKK (135 aa). Residues 430 to 451 show a composition bias toward acidic residues; it reads GSDDEDEDDDDDESSEDSEDEE. A phosphoserine mark is found at Ser-443, Ser-444, and Ser-447. A compositionally biased stretch (polar residues) spans 464–475; sequence AKSQGKTASMKQ. Basic residues-rich tracts occupy residues 490–511 and 544–554; these read GKVR…RKAR and SAMKKSFKTKK.

In terms of assembly, interacts (via PxVxL motif) with CBX5 (via Trp-174).

The protein resides in the nucleus. Its subcellular location is the chromosome. Functionally, component of heterochromatin that maintains heterochromatin integrity during G1/S progression and regulates the duration of G1 phase to critically influence cell proliferative capacity. May play a role in hypoxia-induced oncogenesis. The sequence is that of Heterochromatin protein 1-binding protein 3 (Hp1bp3) from Mus musculus (Mouse).